Reading from the N-terminus, the 66-residue chain is MNNSMINPSIVDLLTKVGDRYSLVILTSKRAREIIEGAEPLIKVDSHKPLTIAINEVNEDIVKYEE.

Belongs to the RNA polymerase subunit omega family. As to quaternary structure, the RNAP catalytic core consists of 2 alpha, 1 beta, 1 beta' and 1 omega subunit. When a sigma factor is associated with the core the holoenzyme is formed, which can initiate transcription.

The catalysed reaction is RNA(n) + a ribonucleoside 5'-triphosphate = RNA(n+1) + diphosphate. Its function is as follows. Promotes RNA polymerase assembly. Latches the N- and C-terminal regions of the beta' subunit thereby facilitating its interaction with the beta and alpha subunits. This chain is DNA-directed RNA polymerase subunit omega, found in Clostridium botulinum (strain Alaska E43 / Type E3).